The primary structure comprises 334 residues: Glycerol-3-phosphate dehydrogenase [NAD(P)+] (334 aa).

NADPH is bound by residues Ser14, Tyr15, His35, and Lys109. Residues Lys109, Gly138, and Thr140 each contribute to the sn-glycerol 3-phosphate site. Ala142 contacts NADPH. Lys194, Asp247, Ser257, Arg258, and Asn259 together coordinate sn-glycerol 3-phosphate. Lys194 functions as the Proton acceptor in the catalytic mechanism. Arg258 contacts NADPH. NADPH is bound by residues Val282 and Glu284.

It belongs to the NAD-dependent glycerol-3-phosphate dehydrogenase family.

The protein localises to the cytoplasm. The catalysed reaction is sn-glycerol 3-phosphate + NAD(+) = dihydroxyacetone phosphate + NADH + H(+). It catalyses the reaction sn-glycerol 3-phosphate + NADP(+) = dihydroxyacetone phosphate + NADPH + H(+). The protein operates within membrane lipid metabolism; glycerophospholipid metabolism. Catalyzes the reduction of the glycolytic intermediate dihydroxyacetone phosphate (DHAP) to sn-glycerol 3-phosphate (G3P), the key precursor for phospholipid synthesis. This is Glycerol-3-phosphate dehydrogenase [NAD(P)+] from Psychromonas ingrahamii (strain DSM 17664 / CCUG 51855 / 37).